The primary structure comprises 351 residues: Dihydroorotate dehydrogenase (quinone) (351 aa).

Residues 65 to 69 and Thr-89 contribute to the FMN site; that span reads AGLDK. Lys-69 is a substrate binding site. 114-118 contacts substrate; the sequence is NRLGF. Residues Asn-150 and Asn-183 each coordinate FMN. Asn-183 lines the substrate pocket. Ser-186 functions as the Nucleophile in the catalytic mechanism. Substrate is bound at residue Asn-188. 2 residues coordinate FMN: Lys-228 and Thr-256. A substrate-binding site is contributed by 257–258; it reads NT. FMN contacts are provided by residues Gly-279, Gly-308, and 329–330; that span reads YT.

Belongs to the dihydroorotate dehydrogenase family. Type 2 subfamily. As to quaternary structure, monomer. FMN serves as cofactor.

The protein localises to the cell membrane. The enzyme catalyses (S)-dihydroorotate + a quinone = orotate + a quinol. Its pathway is pyrimidine metabolism; UMP biosynthesis via de novo pathway; orotate from (S)-dihydroorotate (quinone route): step 1/1. In terms of biological role, catalyzes the conversion of dihydroorotate to orotate with quinone as electron acceptor. In Acidovorax ebreus (strain TPSY) (Diaphorobacter sp. (strain TPSY)), this protein is Dihydroorotate dehydrogenase (quinone).